We begin with the raw amino-acid sequence, 646 residues long: Wee1-like protein kinase (646 aa).

A disordered region spans residues 1–181 (MSFLSRQQPP…GTPPHKTFRK (181 aa)). A compositionally biased stretch (acidic residues) spans 32 to 43 (DCEEEEEEEEEE). Phosphoserine; by PLK1 is present on serine 53. Residues serine 78 and serine 85 each carry the phosphoserine modification. Positions 94 to 103 (LLPGACPGAD) are enriched in low complexity. The residue at position 123 (serine 123) is a Phosphoserine; by CDK1. A phosphoserine mark is found at serine 127, serine 137, serine 139, serine 150, and serine 165. The span at 158 to 170 (RAGEGRRSPRPDH) shows a compositional bias: basic and acidic residues. Threonine 187, threonine 190, and threonine 239 each carry phosphothreonine. Serine 270, serine 307, and serine 312 each carry phosphoserine. The Protein kinase domain maps to 299–569 (FHELEKIGSG…AMALVKHSVL (271 aa)). ATP is bound by residues 305–313 (IGSGEFGSV) and lysine 328. A Mg(2+)-binding site is contributed by asparagine 342. The active-site Proton acceptor is aspartate 426. Positions 431, 463, and 465 each coordinate Mg(2+). Serine 642 carries the phosphoserine; by BRSK1 and BRSK2 modification.

Belongs to the protein kinase superfamily. Ser/Thr protein kinase family. WEE1 subfamily. Requires Mg(2+) as cofactor. Phosphorylated during M and G1 phases. Also autophosphorylated. Phosphorylation at Ser-642 by BRSK1 and BRSK2 in post-mitotic neurons, leads to down-regulate WEE1 activity in polarized neurons. Phosphorylated at Ser-53 and Ser-123 by PLK1 and CDK1, respectively, generating an signal for degradation that can be recognized by the SCF(BTRC) complex, leading to its ubiquitination and degradation at the onset of G2/M phase. In terms of processing, dephosphorylated at Thr-239 by CTDP1. Dephosphorylated at Ser-53 and Ser-123 by the serine/threonine-protein phosphatase 2A preventing its ubiquitin-mediated degradation. Post-translationally, ubiquitinated and degraded at the onset of G2/M phase.

It is found in the nucleus. The catalysed reaction is L-tyrosyl-[protein] + ATP = O-phospho-L-tyrosyl-[protein] + ADP + H(+). With respect to regulation, synthesis is increased during S and G2 phases, presumably by an increase in transcription; activity is decreased by phosphorylation during M phase. Protein levels fall in M phase as a result of decreased synthesis combined with degradation. Activity seems to be negatively regulated by phosphorylation upon entry into mitosis, although N-terminal phosphorylation might also regulate the protein stability via protection from proteolysis or might regulate the subcellular location. In terms of biological role, acts as a negative regulator of entry into mitosis (G2 to M transition) by protecting the nucleus from cytoplasmically activated cyclin B1-complexed CDK1 before the onset of mitosis by mediating phosphorylation of CDK1 on 'Tyr-15'. Specifically phosphorylates and inactivates cyclin B1-complexed CDK1 reaching a maximum during G2 phase and a minimum as cells enter M phase. Phosphorylation of cyclin B1-CDK1 occurs exclusively on 'Tyr-15' and phosphorylation of monomeric CDK1 does not occur. Its activity increases during S and G2 phases and decreases at M phase when it is hyperphosphorylated. A correlated decrease in protein level occurs at M/G1 phase, probably due to its degradation. The chain is Wee1-like protein kinase from Homo sapiens (Human).